The primary structure comprises 606 residues: Threonine--tRNA ligase (606 aa).

Positions 212–503 are catalytic; that stretch reads DHRKLGVEMK…LIEHTAGELP (292 aa). Residues cysteine 304, histidine 355, and histidine 480 each coordinate Zn(2+).

Belongs to the class-II aminoacyl-tRNA synthetase family. Homodimer. Zn(2+) is required as a cofactor.

Its subcellular location is the cytoplasm. The catalysed reaction is tRNA(Thr) + L-threonine + ATP = L-threonyl-tRNA(Thr) + AMP + diphosphate + H(+). In terms of biological role, catalyzes the attachment of threonine to tRNA(Thr) in a two-step reaction: L-threonine is first activated by ATP to form Thr-AMP and then transferred to the acceptor end of tRNA(Thr). Also edits incorrectly charged L-seryl-tRNA(Thr). In Campylobacter curvus (strain 525.92), this protein is Threonine--tRNA ligase.